A 190-amino-acid chain; its full sequence is Translation initiation factor IF-3 (190 aa).

It belongs to the IF-3 family. Monomer.

It is found in the cytoplasm. In terms of biological role, IF-3 binds to the 30S ribosomal subunit and shifts the equilibrium between 70S ribosomes and their 50S and 30S subunits in favor of the free subunits, thus enhancing the availability of 30S subunits on which protein synthesis initiation begins. The chain is Translation initiation factor IF-3 from Prochlorococcus marinus (strain MIT 9312).